A 237-amino-acid polypeptide reads, in one-letter code: DNA repair protein RecO (237 aa).

This sequence belongs to the RecO family.

Its function is as follows. Involved in DNA repair and RecF pathway recombination. This chain is DNA repair protein RecO, found in Actinobacillus succinogenes (strain ATCC 55618 / DSM 22257 / CCUG 43843 / 130Z).